Consider the following 417-residue polypeptide: Exodeoxyribonuclease 7 large subunit (417 aa).

It belongs to the XseA family. As to quaternary structure, heterooligomer composed of large and small subunits.

Its subcellular location is the cytoplasm. The enzyme catalyses Exonucleolytic cleavage in either 5'- to 3'- or 3'- to 5'-direction to yield nucleoside 5'-phosphates.. Its function is as follows. Bidirectionally degrades single-stranded DNA into large acid-insoluble oligonucleotides, which are then degraded further into small acid-soluble oligonucleotides. This is Exodeoxyribonuclease 7 large subunit from Helicobacter hepaticus (strain ATCC 51449 / 3B1).